Here is a 244-residue protein sequence, read N- to C-terminus: Glutathione S-transferase theta-2 (244 aa).

The GST N-terminal domain occupies 2–82 (GLELYLDLLS…YLSSKYQVAD (81 aa)). Glutathione contacts are provided by residues 40-41 (HL), 53-54 (KV), 66-67 (ES), and 104-107 (DNIR). Residues 88–230 (DLQARAQVHE…AKKTLPVPPP (143 aa)) form the GST C-terminal domain.

The protein belongs to the GST superfamily. Theta family. In terms of assembly, homodimer. In terms of tissue distribution, highest values found in liver followed by testis, adrenal gland, kidney, lung, brain and skeletal muscle. In liver, highest expression found in central vein limiting plate hepatocytes. In lung, expressed mainly in club cells of the bronchiolar epithelium and, at low levels, in type II alveolar cells.

It is found in the cytoplasm. Its subcellular location is the cytosol. The protein resides in the nucleus. It carries out the reaction RX + glutathione = an S-substituted glutathione + a halide anion + H(+). Its function is as follows. Catalyzes the inactivation of reactive sulfate esters in carcinogenic arylmethanols. Highest activity towards ethacrynic acid and cumene hydroperoxide. The sequence is that of Glutathione S-transferase theta-2 (Gstt2) from Rattus norvegicus (Rat).